Here is a 77-residue protein sequence, read N- to C-terminus: Large ribosomal subunit protein uL29 (77 aa).

It belongs to the universal ribosomal protein uL29 family.

The protein is Large ribosomal subunit protein uL29 of Mycolicibacterium vanbaalenii (strain DSM 7251 / JCM 13017 / BCRC 16820 / KCTC 9966 / NRRL B-24157 / PYR-1) (Mycobacterium vanbaalenii).